The primary structure comprises 1229 residues: Chitin synthase 4 (1229 aa).

The segment at 1–196 (MSLPERPGAK…IVKEGKRKEK (196 aa)) is disordered. The Cytoplasmic segment spans residues 1–202 (MSLPERPGAK…RKEKIPEQLR (202 aa)). Residues 18–27 (SYRKSPSRRN) are compositionally biased toward basic residues. Positions 43-66 (GQHQRGPSVNSFAETIRSPNSNIE) are enriched in polar residues. Basic and acidic residues predominate over residues 92–105 (IRPERNRIDRDHPN). A compositionally biased stretch (low complexity) spans 137–150 (SGPPSGSNSASGSG). Composition is skewed to basic and acidic residues over residues 164–177 (SGRE…DNTR) and 187–196 (IVKEGKRKEK). The helical transmembrane segment at 203-223 (PPSAWNVYCAVITFWSPDFIM) threads the bilayer. Residues 224 to 240 (KCCGMPAKAQRRAWREK) lie on the Extracellular side of the membrane. Residues 241–261 (IGLISLILIIMGVVGFLTFGF) form a helical membrane-spanning segment. Residues 262–495 (NQAVCGGPVL…IKVGTVDTDT (234 aa)) are Cytoplasmic-facing. The helical transmembrane segment at 496–516 (VGCIAAKVVLYVSLALILSVV) threads the bilayer. Residues 517-1054 (GARFTLALIF…LCGTFCFSMQ (538 aa)) lie on the Extracellular side of the membrane. Disordered stretches follow at residues 539–589 (TSQT…RSSF) and 601–648 (GAER…DPYA). Over residues 568-581 (GDVGSSVAGASSSD) the composition is skewed to low complexity. N-linked (GlcNAc...) asparagine glycosylation is found at Asn608, Asn635, and Asn1030. Polar residues predominate over residues 608–648 (NKSMPTTMASQASGGYMGPSSTAYRETNESRTSFLKSDPYA). Residues 1055-1075 (FVIFIELIGTLVLPAAIAFTF) form a helical membrane-spanning segment. At 1076–1088 (YVVIISIINQPPQ) the chain is on the cytoplasmic side. The chain crosses the membrane as a helical span at residues 1089 to 1109 (IIPLVLLGLILGLPAILIIIT). The Extracellular segment spans residues 1110-1114 (AHSWS). Residues 1115–1135 (YVLWMLIYLLSLPVWNFVLPA) traverse the membrane as a helical segment. Residues 1136–1229 (YAFWKFDDFS…QQYDEYYSDA (94 aa)) lie on the Cytoplasmic side of the membrane. A disordered region spans residues 1210-1229 (WASAPPHHHQQQYDEYYSDA).

It belongs to the chitin synthase family. Class IV subfamily.

It localises to the cell membrane. It carries out the reaction [(1-&gt;4)-N-acetyl-beta-D-glucosaminyl](n) + UDP-N-acetyl-alpha-D-glucosamine = [(1-&gt;4)-N-acetyl-beta-D-glucosaminyl](n+1) + UDP + H(+). Polymerizes chitin, a structural polymer of the cell wall and septum, by transferring the sugar moiety of UDP-GlcNAc to the non-reducing end of the growing chitin polymer. Might function as a negative regulator on expression of other CHS genes. This chain is Chitin synthase 4, found in Pyricularia oryzae (strain 70-15 / ATCC MYA-4617 / FGSC 8958) (Rice blast fungus).